The primary structure comprises 165 residues: Cyclic pyranopterin monophosphate synthase (165 aa).

Residues 83–85 (FCH) and 120–121 (ME) each bind substrate. Asp-135 is an active-site residue.

Belongs to the MoaC family. In terms of assembly, homohexamer; trimer of dimers.

It carries out the reaction (8S)-3',8-cyclo-7,8-dihydroguanosine 5'-triphosphate = cyclic pyranopterin phosphate + diphosphate. Its pathway is cofactor biosynthesis; molybdopterin biosynthesis. Its function is as follows. Catalyzes the conversion of (8S)-3',8-cyclo-7,8-dihydroguanosine 5'-triphosphate to cyclic pyranopterin monophosphate (cPMP). The polypeptide is Cyclic pyranopterin monophosphate synthase (Xanthomonas campestris pv. campestris (strain 8004)).